Consider the following 283-residue polypeptide: 4-diphosphocytidyl-2-C-methyl-D-erythritol kinase (283 aa).

Lys10 is a catalytic residue. 99-109 (PMGGGLGGGSS) contributes to the ATP binding site. Asp141 is an active-site residue.

It belongs to the GHMP kinase family. IspE subfamily. Homodimer.

The catalysed reaction is 4-CDP-2-C-methyl-D-erythritol + ATP = 4-CDP-2-C-methyl-D-erythritol 2-phosphate + ADP + H(+). Its pathway is isoprenoid biosynthesis; isopentenyl diphosphate biosynthesis via DXP pathway; isopentenyl diphosphate from 1-deoxy-D-xylulose 5-phosphate: step 3/6. Functionally, catalyzes the phosphorylation of the position 2 hydroxy group of 4-diphosphocytidyl-2C-methyl-D-erythritol. This chain is 4-diphosphocytidyl-2-C-methyl-D-erythritol kinase, found in Salmonella enteritidis PT4 (strain P125109).